Reading from the N-terminus, the 254-residue chain is UPF0246 protein BDI_1226 (254 aa).

The protein belongs to the UPF0246 family.

This chain is UPF0246 protein BDI_1226, found in Parabacteroides distasonis (strain ATCC 8503 / DSM 20701 / CIP 104284 / JCM 5825 / NCTC 11152).